A 322-amino-acid polypeptide reads, in one-letter code: Malate dehydrogenase (322 aa).

Residues 10–15 (GSGQIG) and aspartate 34 contribute to the NAD(+) site. Arginine 83 and arginine 89 together coordinate substrate. Residues asparagine 96 and 119-121 (ITN) contribute to the NAD(+) site. The substrate site is built by asparagine 121 and arginine 152. Residue histidine 176 is the Proton acceptor of the active site.

The protein belongs to the LDH/MDH superfamily. MDH type 3 family.

It catalyses the reaction (S)-malate + NAD(+) = oxaloacetate + NADH + H(+). In terms of biological role, catalyzes the reversible oxidation of malate to oxaloacetate. The protein is Malate dehydrogenase of Rhodopseudomonas palustris (strain HaA2).